A 518-amino-acid chain; its full sequence is Putative Rieske 2Fe-2S iron-sulfur protein MSMEG_6410/MSMEI_6242 (518 aa).

Lysine 375 is covalently cross-linked (Isoglutamyl lysine isopeptide (Lys-Gln) (interchain with Q-Cter in protein Pup)). The region spanning 431-518 (LYTFFKCLTD…KGHELRCQKL (88 aa)) is the Rieske domain. [2Fe-2S] cluster contacts are provided by cysteine 471, histidine 473, cysteine 491, and histidine 494.

The cofactor is [2Fe-2S] cluster.

The protein is Putative Rieske 2Fe-2S iron-sulfur protein MSMEG_6410/MSMEI_6242 of Mycolicibacterium smegmatis (strain ATCC 700084 / mc(2)155) (Mycobacterium smegmatis).